The primary structure comprises 230 residues: 2,3-bisphosphoglycerate-dependent phosphoglycerate mutase (230 aa).

Substrate contacts are provided by residues 8–15, 21–22, R60, 87–90, K98, 114–115, and 183–184; these read RHGESEWN, TG, ERHY, RR, and GN. H9 serves as the catalytic Tele-phosphohistidine intermediate. Residue E87 is the Proton donor/acceptor of the active site.

It belongs to the phosphoglycerate mutase family. BPG-dependent PGAM subfamily.

It catalyses the reaction (2R)-2-phosphoglycerate = (2R)-3-phosphoglycerate. The protein operates within carbohydrate degradation; glycolysis; pyruvate from D-glyceraldehyde 3-phosphate: step 3/5. In terms of biological role, catalyzes the interconversion of 2-phosphoglycerate and 3-phosphoglycerate. The polypeptide is 2,3-bisphosphoglycerate-dependent phosphoglycerate mutase (Streptococcus pneumoniae (strain P1031)).